The chain runs to 197 residues: Fe/S biogenesis protein NfuA (197 aa).

C155 and C158 together coordinate [4Fe-4S] cluster.

Belongs to the NfuA family. In terms of assembly, homodimer. The cofactor is [4Fe-4S] cluster.

In terms of biological role, involved in iron-sulfur cluster biogenesis. Binds a 4Fe-4S cluster, can transfer this cluster to apoproteins, and thereby intervenes in the maturation of Fe/S proteins. Could also act as a scaffold/chaperone for damaged Fe/S proteins. In Pseudomonas syringae pv. syringae (strain B728a), this protein is Fe/S biogenesis protein NfuA.